Here is a 659-residue protein sequence, read N- to C-terminus: MPSFYEKPLFRYPIYALIALSIITILISFYFNWILGTVEVLLLAVILFFIKRADSLIRQEIDAYISTLSYRLKKVGEEALMEMPIGIMLFNDQYYIEWANPFLSSCFNESTLVGRSLYDTCESVVPLIKQEVESETVTLNDRKFRVVIKRDERLLYFFDVTEQIQIEKLYENERTVLAYIFLDNYDDVTQGLDDQTRSTMNSQVTSLLNAWAQEYGIFLKRTSSERFIAVLNEHILTELENSKFSILDEVREKTSFDGVALTLSVGVGASVSSLKELGDLAQSSLDLALGRGGDQVAIKLPNGKVKFYGGKTNPMEKRTRVRARVISHALKEIVTESSNVIIMGHKFPDMDSIGAAIGILKVAQANNKDGFIVIDPNQIGSSVQRLIGEIKKYEELWSRFITPEEAMEISNDDTLLVIVDTHKPSLVMEERLVNKIEHIVVIDHHRRGEEFIRDPLLVYMEPYASSTAELVTELLEYQPKRLKINMIEATALLAGIIVDTKSFSLRTGSRTFDAASYLRAKGADTVLVQKFLKETVDSYIKRAKLIQHTVLYKDNIAIASLPENEEEYFDQVLIAQAADSLLSMSEVEASFAVARRDEQTVCISARSLGEVNVQIIMEALEGGGHLTNAATQLSGISVSEALERLKHAIDEYFEGGVQR.

Residues 1 to 8 (MPSFYEKP) lie on the Cytoplasmic side of the membrane. 2 consecutive transmembrane segments (helical) span residues 9–29 (LFRY…LISF) and 30–50 (YFNW…LFFI). The Cytoplasmic portion of the chain corresponds to 51-659 (KRADSLIRQE…DEYFEGGVQR (609 aa)). Positions 84 to 149 (PIGIMLFNDQ…NDRKFRVVIK (66 aa)) are PAS-like domain, required for heme-binding. One can recognise a GGDEF domain in the interval 173-301 (ERTVLAYIFL…GGDQVAIKLP (129 aa)). The tract at residues 339 to 496 (NVIIMGHKFP…IEATALLAGI (158 aa)) is DHH domain. Positions 345, 349, 351, 420, 444, and 499 each coordinate Mn(2+). The DHHA1 domain stretch occupies residues 591-646 (FAVARRDEQTVCISARSLGEVNVQIIMEALEGGGHLTNAATQLSGISVSEALERLK).

This sequence belongs to the GdpP/PdeA phosphodiesterase family. It depends on heme b as a cofactor. Mg(2+) serves as cofactor. The cofactor is Mn(2+).

It is found in the cell membrane. It catalyses the reaction 3',3'-c-di-AMP + H2O = 5'-O-phosphonoadenylyl-(3'-&gt;5')-adenosine + H(+). Phosphodiesterase (PDE) inhibited by Zn(2+), Ca(2+) inhibits in the presence of Mg(2+) but not Mn(2+); c-di-AMP PDE activity is competitively inhibited by ppGpp. Heme binding (by Fe(2+) or Fe(3+) heme) inhibits PDE, activity is partially restored by KCN or NO only for Fe(2+) heme. Binding of NO to Fe(2+) heme switches from hexa- to pentacoordination. Heme binding inhibits the ATPase activity. Its function is as follows. Has phosphodiesterase (PDE) activity against cyclic-di-AMP (c-di-AMP) and to a much lesser extent against cyclic-di-GMP (c-di-GMP) in the DHH/DHHA1 domains. Also has ATPase activity, probably via the GGDEF domain. Overexpression leads to increased sensitivity to methyl methanesulfonate (MMS) and H(2)O(2). Overexpression leads to extreme sensitivity to the beta-lactam antibiotic cefuroxime (CEF), probably dependent on PDE activity. May monitor cellular heme or NO levels. In B.subtilis c-di-AMP is a second messenger that mediates growth, DNA repair and cell wall homeostasis; it is toxic when present in excess. This is Cyclic-di-AMP phosphodiesterase GdpP from Bacillus subtilis (strain 168).